The primary structure comprises 46 residues: Major cold shock protein (46 aa).

The CSD domain maps to 1 to 46 (EKGFGFLTQNNGGADVFVHFRAIASEGFKTLTEGQKVSFDVEQGQK).

In terms of assembly, homodimer.

Its subcellular location is the cytoplasm. The polypeptide is Major cold shock protein (cspA) (Photobacterium leiognathi subsp. mandapamensis (Photobacterium mandapamensis)).